Here is a 447-residue protein sequence, read N- to C-terminus: Cysteine--tRNA ligase (447 aa).

A Zn(2+)-binding site is contributed by cysteine 28. Positions 30-40 match the 'HIGH' region motif; it reads PTVYNYIHIGN. Zn(2+) contacts are provided by cysteine 211, histidine 236, and glutamate 240. Positions 268 to 272 match the 'KMSKS' region motif; it reads KMSKS. Lysine 271 contacts ATP.

Belongs to the class-I aminoacyl-tRNA synthetase family. In terms of assembly, monomer. Zn(2+) serves as cofactor.

It is found in the cytoplasm. It catalyses the reaction tRNA(Cys) + L-cysteine + ATP = L-cysteinyl-tRNA(Cys) + AMP + diphosphate. In Streptococcus pyogenes serotype M1, this protein is Cysteine--tRNA ligase.